The chain runs to 1479 residues: WASH complex subunit 2 (1479 aa).

A compositionally biased stretch (low complexity) spans 1 to 17; it reads MPEEQPQQQQQPVREQP. Disordered regions lie at residues 1-25, 188-210, 240-564, 576-1383, and 1419-1479; these read MPEEQPQQQQQPVREQPSNPDDVPW, GGLVEGGEQAGTDAQPSANTEKK, FIED…GGVK, FSGK…FDDI, and TSTT…NLFD. The span at 242–279 shows a compositional bias: acidic residues; it reads EDSDSDSSDEEDEEDVDAEDGSDESSSESSSDDDDEKD. Low complexity predominate over residues 334 to 349; the sequence is SKKSSNSYTSSLSDIL. Positions 422–431 are enriched in acidic residues; the sequence is DDDLFGDSEE. Composition is skewed to low complexity over residues 465 to 475 and 514 to 532; these read TTTSSQPQQKK and TPKPKSTTTSAAPTATTTK. Thr-535 carries the post-translational modification Phosphothreonine. A compositionally biased stretch (polar residues) spans 542 to 552; that stretch reads ASGSESTTGKS. The segment covering 595-620 has biased composition (basic and acidic residues); that stretch reads TESKASEDDFFSSDKKSTSATKKDAE. Low complexity predominate over residues 709-723; that stretch reads PKAPTTATTTTTTKP. Positions 765-781 are enriched in basic and acidic residues; it reads TETKKQPITEEPKKKQD. A compositionally biased stretch (polar residues) spans 802–814; sequence ASISPASPVSTIE. A compositionally biased stretch (basic and acidic residues) spans 839-885; that stretch reads DLTKDEPAKSEPTKVEPTKVEPTKAEPTKVEPAKVEPTKVESDKKES. Over residues 904-916 the composition is skewed to polar residues; sequence KNPTTSSSTTATE. The span at 951–968 shows a compositional bias: low complexity; sequence SSTTKKSTTTTTTTTSSK. Over residues 981–990 the composition is skewed to basic and acidic residues; it reads KKVEEKKSSD. Low complexity-rich tracts occupy residues 991–1000 and 1010–1021; these read FDSFFSGSDD and KTTTTPPLTSTT. Polar residues predominate over residues 1062 to 1075; the sequence is PLTSNNTKNRTKSI. Over residues 1091-1107 the composition is skewed to basic and acidic residues; sequence EKNRSESPTSEKAEPTK. A compositionally biased stretch (polar residues) spans 1108–1123; sequence KTSNISSLQNKLSLNP. The segment covering 1147–1162 has biased composition (low complexity); that stretch reads STNNDNDSSATDLSDS. Composition is skewed to polar residues over residues 1163–1174 and 1220–1236; these read GRSSPSVTSPTL and KSGTSAPNRSESPTPTQ. Ser-1249 is subject to Phosphoserine. The segment covering 1277–1292 has biased composition (low complexity); the sequence is EKTSSGKSSPSPTIKS. Positions 1307-1317 are enriched in polar residues; the sequence is ASTTTKPTASE. Over residues 1327 to 1358 the composition is skewed to basic and acidic residues; sequence KKSEPETPKETPKETPKEKEQTKEKEQPKETP. 2 stretches are compositionally biased toward low complexity: residues 1419-1445 and 1452-1466; these read TSTTSKSTTTTTTTTTTKAKSTKAVDN and NTTTKATPTKATPSK.

The protein belongs to the FAM21 family. Probable component of the WASH complex.

This is WASH complex subunit 2 from Dictyostelium discoideum (Social amoeba).